The sequence spans 1432 residues: Gag-Pol polyprotein (1432 aa).

G2 is lipidated: N-myristoyl glycine; by host. Residues 7-31 (ILSGGKLDDWEKIRLRPGGKKQYRI) are interaction with Gp41. An interaction with host CALM1 region spans residues 8-43 (LSGGKLDDWEKIRLRPGGKKQYRIKHLVWASRELDR). The segment at 12-19 (KLDDWEKI) is interaction with host AP3D1. The interaction with membrane phosphatidylinositol 4,5-bisphosphate and RNA stretch occupies residues 14–33 (DDWEKIRLRPGGKKQYRIKH). The Nuclear export signal motif lies at 16 to 22 (WEKIRLR). A Nuclear localization signal motif is present at residues 26–32 (KKQYRIK). The tract at residues 73-77 (EEIKS) is interaction with membrane phosphatidylinositol 4,5-bisphosphate. A Phosphotyrosine; by host modification is found at Y132. Positions 189–227 (NTIGGHQAAMQMLKDTINEEAAEWDRVHPVHAGPVAPGQ) are interaction with human PPIA/CYPA and NUP153. A dimerization/Multimerization of capsid protein p24 region spans residues 277–363 (YSPVSILDIR…GGPGHKARVL (87 aa)). CCHC-type zinc fingers lie at residues 389–406 (VKCFNCGKQGHIAKNCRA) and 410–427 (KGCWKCGKEGHQMKDCTE). The interval 443-482 (EAREFSPEQTRANSPTSREPRVRRGDPLPETGAEGQGTVS) is disordered. The segment covering 449–459 (PEQTRANSPTS) has biased composition (polar residues). Residues 460–469 (REPRVRRGDP) show a composition bias toward basic and acidic residues. The interval 486–490 (PQITL) is dimerization of protease. The Peptidase A2 domain maps to 505 to 574 (REALLDTGAD…TPVNIIGRNM (70 aa)). D510 acts as the For protease activity; shared with dimeric partner in catalysis. 2 dimerization of protease regions span residues 534–540 (GIGGFIK) and 573–585 (NMLTQLGCTLNFP). Residues 628-818 (EGKISRIGPE…PPFLWMGYEL (191 aa)) form the Reverse transcriptase domain. Mg(2+)-binding residues include D694, D769, and D770. Residues 811 to 819 (FLWMGYELH) are RT 'primer grip'. Residues 982–998 (WETWWTDYWQATWIPEW) carry the Tryptophan repeat motif motif. One can recognise an RNase H type-1 domain in the interval 1018–1141 (IMGAETFYVD…VDKLVSSGIR (124 aa)). Mg(2+) contacts are provided by D1027, E1062, D1082, and D1133. Residues 1147-1188 (DGIDKAQEEHEKYHSNWRAMASDFNLPPVVAKEIVASCDKCQ) form an Integrase-type zinc finger. Zn(2+) contacts are provided by H1156, H1160, C1184, and C1187. An Integrase catalytic domain is found at 1198 to 1348 (VDCSPGIWQL…SAGERIIDII (151 aa)). 3 residues coordinate Mg(2+): D1208, D1260, and E1296. The segment at residues 1367–1414 (FRVYYRDSRDPIWKGPAKLLWKGEGAVVIQDNSEIKVVPRRKAKIIRD) is a DNA-binding region (integrase-type).

As to quaternary structure, homotrimer; further assembles as hexamers of trimers. Interacts with gp41 (via C-terminus). Interacts with host CALM1; this interaction induces a conformational change in the Matrix protein, triggering exposure of the myristate group. Interacts with host AP3D1; this interaction allows the polyprotein trafficking to multivesicular bodies during virus assembly. Part of the pre-integration complex (PIC) which is composed of viral genome, matrix protein, Vpr and integrase. In terms of assembly, homodimer; the homodimer further multimerizes as homohexamers or homopentamers. Interacts with human PPIA/CYPA; This interaction stabilizes the capsid. Interacts with human NUP153. Interacts with host PDZD8; this interaction stabilizes the capsid. Interacts with monkey TRIM5; this interaction destabilizes the capsid. Homodimer, whose active site consists of two apposed aspartic acid residues. As to quaternary structure, heterodimer of p66 RT and p51 RT (RT p66/p51). Heterodimerization of RT is essential for DNA polymerase activity. The overall folding of the subdomains is similar in p66 RT and p51 RT but the spatial arrangements of the subdomains are dramatically different. In terms of assembly, homotetramer; may further associate as a homohexadecamer. Part of the pre-integration complex (PIC) which is composed of viral genome, matrix protein, Vpr and integrase. Interacts with human SMARCB1/INI1 and human PSIP1/LEDGF isoform 1. Interacts with human KPNA3; this interaction might play a role in nuclear import of the pre-integration complex. Interacts with human NUP153; this interaction might play a role in nuclear import of the pre-integration complex. It depends on Mg(2+) as a cofactor. In terms of processing, specific enzymatic cleavages by the viral protease yield mature proteins. The protease is released by autocatalytic cleavage. The polyprotein is cleaved during and after budding, this process is termed maturation. Proteolytic cleavage of p66 RT removes the RNase H domain to yield the p51 RT subunit. Nucleocapsid protein p7 might be further cleaved after virus entry. Post-translationally, tyrosine phosphorylated presumably in the virion by a host kinase. Phosphorylation is apparently not a major regulator of membrane association. Phosphorylated possibly by host MAPK1; this phosphorylation is necessary for Pin1-mediated virion uncoating. In terms of processing, methylated by host PRMT6, impairing its function by reducing RNA annealing and the initiation of reverse transcription.

It is found in the host cell membrane. The protein resides in the host endosome. Its subcellular location is the host multivesicular body. It localises to the virion membrane. The protein localises to the host nucleus. It is found in the host cytoplasm. The protein resides in the virion. It catalyses the reaction Specific for a P1 residue that is hydrophobic, and P1' variable, but often Pro.. The enzyme catalyses Endohydrolysis of RNA in RNA/DNA hybrids. Three different cleavage modes: 1. sequence-specific internal cleavage of RNA. Human immunodeficiency virus type 1 and Moloney murine leukemia virus enzymes prefer to cleave the RNA strand one nucleotide away from the RNA-DNA junction. 2. RNA 5'-end directed cleavage 13-19 nucleotides from the RNA end. 3. DNA 3'-end directed cleavage 15-20 nucleotides away from the primer terminus.. The catalysed reaction is 3'-end directed exonucleolytic cleavage of viral RNA-DNA hybrid.. It carries out the reaction DNA(n) + a 2'-deoxyribonucleoside 5'-triphosphate = DNA(n+1) + diphosphate. Its activity is regulated as follows. Protease: The viral protease is inhibited by many synthetic protease inhibitors (PIs), such as amprenavir, atazanavir, indinavir, loprinavir, nelfinavir, ritonavir and saquinavir. Use of protease inhibitors in tritherapy regimens permit more ambitious therapeutic strategies. Reverse transcriptase/ribonuclease H: RT can be inhibited either by nucleoside RT inhibitors (NRTIs) or by non nucleoside RT inhibitors (NNRTIs). NRTIs act as chain terminators, whereas NNRTIs inhibit DNA polymerization by binding a small hydrophobic pocket near the RT active site and inducing an allosteric change in this region. Classical NRTIs are abacavir, adefovir (PMEA), didanosine (ddI), lamivudine (3TC), stavudine (d4T), tenofovir (PMPA), zalcitabine (ddC), and zidovudine (AZT). Classical NNRTIs are atevirdine (BHAP U-87201E), delavirdine, efavirenz (DMP-266), emivirine (I-EBU), and nevirapine (BI-RG-587). The tritherapies used as a basic effective treatment of AIDS associate two NRTIs and one NNRTI. In terms of biological role, mediates, with Gag polyprotein, the essential events in virion assembly, including binding the plasma membrane, making the protein-protein interactions necessary to create spherical particles, recruiting the viral Env proteins, and packaging the genomic RNA via direct interactions with the RNA packaging sequence (Psi). Gag-Pol polyprotein may regulate its own translation, by the binding genomic RNA in the 5'-UTR. At low concentration, the polyprotein would promote translation, whereas at high concentration, the polyprotein would encapsidate genomic RNA and then shut off translation. Its function is as follows. Targets the polyprotein to the plasma membrane via a multipartite membrane-binding signal, that includes its myristoylated N-terminus. Matrix protein is part of the pre-integration complex. Implicated in the release from host cell mediated by Vpu. Binds to RNA. Forms the conical core that encapsulates the genomic RNA-nucleocapsid complex in the virion. Most core are conical, with only 7% tubular. The core is constituted by capsid protein hexamer subunits. The core is disassembled soon after virion entry. Host restriction factors such as TRIM5-alpha or TRIMCyp bind retroviral capsids and cause premature capsid disassembly, leading to blocks in reverse transcription. Capsid restriction by TRIM5 is one of the factors which restricts HIV-1 to the human species. Host PIN1 apparently facilitates the virion uncoating. On the other hand, interactions with PDZD8 or CYPA stabilize the capsid. Functionally, encapsulates and protects viral dimeric unspliced genomic RNA (gRNA). Binds these RNAs through its zinc fingers. Acts as a nucleic acid chaperone which is involved in rearangement of nucleic acid secondary structure during gRNA retrotranscription. Also facilitates template switch leading to recombination. As part of the polyprotein, participates in gRNA dimerization, packaging, tRNA incorporation and virion assembly. In terms of biological role, aspartyl protease that mediates proteolytic cleavages of Gag and Gag-Pol polyproteins during or shortly after the release of the virion from the plasma membrane. Cleavages take place as an ordered, step-wise cascade to yield mature proteins. This process is called maturation. Displays maximal activity during the budding process just prior to particle release from the cell. Also cleaves Nef and Vif, probably concomitantly with viral structural proteins on maturation of virus particles. Hydrolyzes host EIF4GI and PABP1 in order to shut off the capped cellular mRNA translation. The resulting inhibition of cellular protein synthesis serves to ensure maximal viral gene expression and to evade host immune response. Also mediates cleavage of host YTHDF3. Mediates cleavage of host CARD8, thereby activating the CARD8 inflammasome, leading to the clearance of latent HIV-1 in patient CD4(+) T-cells after viral reactivation; in contrast, HIV-1 can evade CARD8-sensing when its protease remains inactive in infected cells prior to viral budding. Its function is as follows. Multifunctional enzyme that converts the viral RNA genome into dsDNA in the cytoplasm, shortly after virus entry into the cell. This enzyme displays a DNA polymerase activity that can copy either DNA or RNA templates, and a ribonuclease H (RNase H) activity that cleaves the RNA strand of RNA-DNA heteroduplexes in a partially processive 3' to 5' endonucleasic mode. Conversion of viral genomic RNA into dsDNA requires many steps. A tRNA(3)-Lys binds to the primer-binding site (PBS) situated at the 5'-end of the viral RNA. RT uses the 3' end of the tRNA primer to perform a short round of RNA-dependent minus-strand DNA synthesis. The reading proceeds through the U5 region and ends after the repeated (R) region which is present at both ends of viral RNA. The portion of the RNA-DNA heteroduplex is digested by the RNase H, resulting in a ssDNA product attached to the tRNA primer. This ssDNA/tRNA hybridizes with the identical R region situated at the 3' end of viral RNA. This template exchange, known as minus-strand DNA strong stop transfer, can be either intra- or intermolecular. RT uses the 3' end of this newly synthesized short ssDNA to perform the RNA-dependent minus-strand DNA synthesis of the whole template. RNase H digests the RNA template except for two polypurine tracts (PPTs) situated at the 5'-end and near the center of the genome. It is not clear if both polymerase and RNase H activities are simultaneous. RNase H probably can proceed both in a polymerase-dependent (RNA cut into small fragments by the same RT performing DNA synthesis) and a polymerase-independent mode (cleavage of remaining RNA fragments by free RTs). Secondly, RT performs DNA-directed plus-strand DNA synthesis using the PPTs that have not been removed by RNase H as primers. PPTs and tRNA primers are then removed by RNase H. The 3' and 5' ssDNA PBS regions hybridize to form a circular dsDNA intermediate. Strand displacement synthesis by RT to the PBS and PPT ends produces a blunt ended, linear dsDNA copy of the viral genome that includes long terminal repeats (LTRs) at both ends. Catalyzes viral DNA integration into the host chromosome, by performing a series of DNA cutting and joining reactions. This enzyme activity takes place after virion entry into a cell and reverse transcription of the RNA genome in dsDNA. The first step in the integration process is 3' processing. This step requires a complex comprising the viral genome, matrix protein, Vpr and integrase. This complex is called the pre-integration complex (PIC). The integrase protein removes 2 nucleotides from each 3' end of the viral DNA, leaving recessed CA OH's at the 3' ends. In the second step, the PIC enters cell nucleus. This process is mediated through integrase and Vpr proteins, and allows the virus to infect a non dividing cell. This ability to enter the nucleus is specific of lentiviruses, other retroviruses cannot and rely on cell division to access cell chromosomes. In the third step, termed strand transfer, the integrase protein joins the previously processed 3' ends to the 5' ends of strands of target cellular DNA at the site of integration. The 5'-ends are produced by integrase-catalyzed staggered cuts, 5 bp apart. A Y-shaped, gapped, recombination intermediate results, with the 5'-ends of the viral DNA strands and the 3' ends of target DNA strands remaining unjoined, flanking a gap of 5 bp. The last step is viral DNA integration into host chromosome. This involves host DNA repair synthesis in which the 5 bp gaps between the unjoined strands are filled in and then ligated. Since this process occurs at both cuts flanking the HIV genome, a 5 bp duplication of host DNA is produced at the ends of HIV-1 integration. Alternatively, Integrase may catalyze the excision of viral DNA just after strand transfer, this is termed disintegration. The sequence is that of Gag-Pol polyprotein (gag-pol) from Homo sapiens (Human).